Here is a 951-residue protein sequence, read N- to C-terminus: Valine--tRNA ligase (951 aa).

Residues 42–52 (PNVTGSLHMGH) carry the 'HIGH' region motif. The 'KMSKS' region signature appears at 554–558 (KMSKS). An ATP-binding site is contributed by Lys-557. The stretch at 880 to 944 (AGLINKEDEL…AEAKAKLIEQ (65 aa)) forms a coiled coil.

It belongs to the class-I aminoacyl-tRNA synthetase family. ValS type 1 subfamily. As to quaternary structure, monomer.

It localises to the cytoplasm. The catalysed reaction is tRNA(Val) + L-valine + ATP = L-valyl-tRNA(Val) + AMP + diphosphate. Catalyzes the attachment of valine to tRNA(Val). As ValRS can inadvertently accommodate and process structurally similar amino acids such as threonine, to avoid such errors, it has a 'posttransfer' editing activity that hydrolyzes mischarged Thr-tRNA(Val) in a tRNA-dependent manner. This is Valine--tRNA ligase from Shigella dysenteriae serotype 1 (strain Sd197).